Reading from the N-terminus, the 518-residue chain is Probable pectinesterase/pectinesterase inhibitor 16 (518 aa).

A signal peptide spans 1-33 (MASSSSISNHKIPNTLMFLVIVNFLYLIQTNSA). The tract at residues 30 to 172 (TNSAVSISSN…TGLLTSSLDL (143 aa)) is pectinesterase inhibitor 16. 2 N-linked (GlcNAc...) asparagine glycosylation sites follow: N82 and N161. A pectinesterase 16 region spans residues 213 to 502 (DAVVAPDGSG…FTVASFIDGN (290 aa)). T289 and Q319 together coordinate substrate. The active-site Proton donor; for pectinesterase activity is D342. Residue D363 is the Nucleophile; for pectinesterase activity of the active site. Residues R422 and W424 each contribute to the substrate site.

In the N-terminal section; belongs to the PMEI family. This sequence in the C-terminal section; belongs to the pectinesterase family. In terms of tissue distribution, expressed in siliques and floral stems.

It is found in the secreted. The protein localises to the cell wall. It catalyses the reaction [(1-&gt;4)-alpha-D-galacturonosyl methyl ester](n) + n H2O = [(1-&gt;4)-alpha-D-galacturonosyl](n) + n methanol + n H(+). It participates in glycan metabolism; pectin degradation; 2-dehydro-3-deoxy-D-gluconate from pectin: step 1/5. Its function is as follows. Acts in the modification of cell walls via demethylesterification of cell wall pectin. The protein is Probable pectinesterase/pectinesterase inhibitor 16 (PME16) of Arabidopsis thaliana (Mouse-ear cress).